The sequence spans 424 residues: UPF0415 protein C7orf25 homolog (424 aa).

This sequence belongs to the UPF0415 family.

This chain is UPF0415 protein C7orf25 homolog, found in Xenopus laevis (African clawed frog).